We begin with the raw amino-acid sequence, 251 residues long: Small ribosomal subunit protein uS2 (251 aa).

This sequence belongs to the universal ribosomal protein uS2 family.

The protein is Small ribosomal subunit protein uS2 of Nitrosomonas eutropha (strain DSM 101675 / C91 / Nm57).